The sequence spans 585 residues: Serine/threonine-protein kinase PknI (585 aa).

The Cytoplasmic portion of the chain corresponds to 1–349 (MALASGVTFA…ASPTRRRPRR (349 aa)). A Protein kinase domain is found at 12-252 (YTVVRMLGCS…SCREFADAMN (241 aa)). ATP is bound by residues 18–26 (LGCSAMGEV) and Lys-41. ADP-binding residues include Lys-41, Asp-90, and Val-92. The active-site Proton acceptor is Asp-137. A helical membrane pass occupies residues 350–370 (ILVGAVAVLLLAGLFAVGIVI). Residues 371–585 (GRKTNTTATE…PTTTAPGPGR (215 aa)) lie on the Extracellular side of the membrane. Residues 546–585 (SGDLPPAVTVPDPATIPDTPDTTSTATLTPPTTTAPGPGR) form a disordered region. The segment covering 554-585 (TVPDPATIPDTPDTTSTATLTPPTTTAPGPGR) has biased composition (low complexity).

It belongs to the protein kinase superfamily. Ser/Thr protein kinase family. Mn(2+) serves as cofactor. Autophosphorylated at serine and threonine residues.

The protein localises to the cytoplasm. Its subcellular location is the cell membrane. The enzyme catalyses L-seryl-[protein] + ATP = O-phospho-L-seryl-[protein] + ADP + H(+). It carries out the reaction L-threonyl-[protein] + ATP = O-phospho-L-threonyl-[protein] + ADP + H(+). Its function is as follows. Plays an important role in slowing down the growth of mycobacteria within the infected host. The chain is Serine/threonine-protein kinase PknI (pknI) from Mycobacterium bovis (strain ATCC BAA-935 / AF2122/97).